Here is a 322-residue protein sequence, read N- to C-terminus: Phosphatidylserine decarboxylase proenzyme (322 aa).

Catalysis depends on charge relay system; for autoendoproteolytic cleavage activity residues D90, H147, and S254. Catalysis depends on S254, which acts as the Schiff-base intermediate with substrate; via pyruvic acid; for decarboxylase activity. S254 bears the Pyruvic acid (Ser); by autocatalysis mark.

It belongs to the phosphatidylserine decarboxylase family. PSD-B subfamily. Prokaryotic type I sub-subfamily. As to quaternary structure, heterodimer of a large membrane-associated beta subunit and a small pyruvoyl-containing alpha subunit. Pyruvate serves as cofactor. Post-translationally, is synthesized initially as an inactive proenzyme. Formation of the active enzyme involves a self-maturation process in which the active site pyruvoyl group is generated from an internal serine residue via an autocatalytic post-translational modification. Two non-identical subunits are generated from the proenzyme in this reaction, and the pyruvate is formed at the N-terminus of the alpha chain, which is derived from the carboxyl end of the proenzyme. The autoendoproteolytic cleavage occurs by a canonical serine protease mechanism, in which the side chain hydroxyl group of the serine supplies its oxygen atom to form the C-terminus of the beta chain, while the remainder of the serine residue undergoes an oxidative deamination to produce ammonia and the pyruvoyl prosthetic group on the alpha chain. During this reaction, the Ser that is part of the protease active site of the proenzyme becomes the pyruvoyl prosthetic group, which constitutes an essential element of the active site of the mature decarboxylase.

The protein resides in the cell membrane. It catalyses the reaction a 1,2-diacyl-sn-glycero-3-phospho-L-serine + H(+) = a 1,2-diacyl-sn-glycero-3-phosphoethanolamine + CO2. It functions in the pathway phospholipid metabolism; phosphatidylethanolamine biosynthesis; phosphatidylethanolamine from CDP-diacylglycerol: step 2/2. Its function is as follows. Catalyzes the formation of phosphatidylethanolamine (PtdEtn) from phosphatidylserine (PtdSer). The sequence is that of Phosphatidylserine decarboxylase proenzyme from Shigella dysenteriae serotype 1 (strain Sd197).